Consider the following 199-residue polypeptide: Imidazoleglycerol-phosphate dehydratase (199 aa).

This sequence belongs to the imidazoleglycerol-phosphate dehydratase family.

It localises to the cytoplasm. It carries out the reaction D-erythro-1-(imidazol-4-yl)glycerol 3-phosphate = 3-(imidazol-4-yl)-2-oxopropyl phosphate + H2O. Its pathway is amino-acid biosynthesis; L-histidine biosynthesis; L-histidine from 5-phospho-alpha-D-ribose 1-diphosphate: step 6/9. This Rhodospirillum rubrum (strain ATCC 11170 / ATH 1.1.1 / DSM 467 / LMG 4362 / NCIMB 8255 / S1) protein is Imidazoleglycerol-phosphate dehydratase.